The following is a 148-amino-acid chain: Cysteine-rich venom protein VAR6 (148 aa).

Residues 1–22 (MILLKLYLTLAAILCQSRGTTS) form the signal peptide. The region spanning 41 to 140 (NKHNDLRRTV…AGVMVGHYTQ (100 aa)) is the SCP domain.

Belongs to the CRISP family. Post-translationally, contains 8 disulfide bonds. Expressed by the venom gland.

The protein localises to the secreted. Functionally, blocks ryanodine receptors, and potassium channels. This is Cysteine-rich venom protein VAR6 from Varanus acanthurus (Ridge-tailed monitor).